We begin with the raw amino-acid sequence, 209 residues long: Uracil phosphoribosyltransferase (209 aa).

5-phospho-alpha-D-ribose 1-diphosphate contacts are provided by residues arginine 79, arginine 104, and 131 to 139; that span reads DPMLATGGS. Uracil is bound by residues isoleucine 194 and 199–201; that span reads GDA. Aspartate 200 lines the 5-phospho-alpha-D-ribose 1-diphosphate pocket.

The protein belongs to the UPRTase family. Mg(2+) serves as cofactor.

The catalysed reaction is UMP + diphosphate = 5-phospho-alpha-D-ribose 1-diphosphate + uracil. It functions in the pathway pyrimidine metabolism; UMP biosynthesis via salvage pathway; UMP from uracil: step 1/1. With respect to regulation, allosterically activated by GTP. Catalyzes the conversion of uracil and 5-phospho-alpha-D-ribose 1-diphosphate (PRPP) to UMP and diphosphate. The polypeptide is Uracil phosphoribosyltransferase (Clostridium acetobutylicum (strain ATCC 824 / DSM 792 / JCM 1419 / IAM 19013 / LMG 5710 / NBRC 13948 / NRRL B-527 / VKM B-1787 / 2291 / W)).